A 353-amino-acid polypeptide reads, in one-letter code: Nicotinate-nucleotide--dimethylbenzimidazole phosphoribosyltransferase (353 aa).

Glu319 acts as the Proton acceptor in catalysis.

Belongs to the CobT family.

It carries out the reaction 5,6-dimethylbenzimidazole + nicotinate beta-D-ribonucleotide = alpha-ribazole 5'-phosphate + nicotinate + H(+). The protein operates within nucleoside biosynthesis; alpha-ribazole biosynthesis; alpha-ribazole from 5,6-dimethylbenzimidazole: step 1/2. Catalyzes the synthesis of alpha-ribazole-5'-phosphate from nicotinate mononucleotide (NAMN) and 5,6-dimethylbenzimidazole (DMB). This Syntrophobacter fumaroxidans (strain DSM 10017 / MPOB) protein is Nicotinate-nucleotide--dimethylbenzimidazole phosphoribosyltransferase.